The sequence spans 477 residues: 3-isopropylmalate dehydratase large subunit (477 aa).

Residues Cys-351, Cys-411, and Cys-414 each coordinate [4Fe-4S] cluster.

The protein belongs to the aconitase/IPM isomerase family. LeuC type 1 subfamily. As to quaternary structure, heterodimer of LeuC and LeuD. [4Fe-4S] cluster serves as cofactor.

The enzyme catalyses (2R,3S)-3-isopropylmalate = (2S)-2-isopropylmalate. Its pathway is amino-acid biosynthesis; L-leucine biosynthesis; L-leucine from 3-methyl-2-oxobutanoate: step 2/4. Catalyzes the isomerization between 2-isopropylmalate and 3-isopropylmalate, via the formation of 2-isopropylmaleate. The protein is 3-isopropylmalate dehydratase large subunit of Kineococcus radiotolerans (strain ATCC BAA-149 / DSM 14245 / SRS30216).